A 323-amino-acid chain; its full sequence is Elongation factor P--(R)-beta-lysine ligase (323 aa).

Residue 76 to 78 coordinates substrate; that stretch reads SPE. ATP is bound by residues 100 to 102 and Asn109; that span reads RNE. Tyr118 provides a ligand contact to substrate. 242 to 243 provides a ligand contact to ATP; the sequence is EL. Residue Glu249 participates in substrate binding. Gly298 lines the ATP pocket.

The protein belongs to the class-II aminoacyl-tRNA synthetase family. EpmA subfamily. Homodimer.

The enzyme catalyses D-beta-lysine + L-lysyl-[protein] + ATP = N(6)-((3R)-3,6-diaminohexanoyl)-L-lysyl-[protein] + AMP + diphosphate + H(+). Its function is as follows. With EpmB is involved in the beta-lysylation step of the post-translational modification of translation elongation factor P (EF-P). Catalyzes the ATP-dependent activation of (R)-beta-lysine produced by EpmB, forming a lysyl-adenylate, from which the beta-lysyl moiety is then transferred to the epsilon-amino group of a conserved specific lysine residue in EF-P. This chain is Elongation factor P--(R)-beta-lysine ligase, found in Histophilus somni (strain 129Pt) (Haemophilus somnus).